Here is a 370-residue protein sequence, read N- to C-terminus: Biotin synthase (370 aa).

Positions 50–276 constitute a Radical SAM core domain; the sequence is FSDGTVDACS…IAVYRFLHPE (227 aa). [4Fe-4S] cluster-binding residues include cysteine 68, cysteine 72, and cysteine 75. Residues cysteine 208 and arginine 280 each contribute to the [2Fe-2S] cluster site. Positions 328 to 370 are disordered; it reads AGLEPNREANTFDPESVKARHRSPAAETASNANRTNATTETDD. Low complexity predominate over residues 352–370; the sequence is AAETASNANRTNATTETDD.

It belongs to the radical SAM superfamily. Biotin synthase family. Homodimer. It depends on [4Fe-4S] cluster as a cofactor. Requires [2Fe-2S] cluster as cofactor.

It carries out the reaction (4R,5S)-dethiobiotin + (sulfur carrier)-SH + 2 reduced [2Fe-2S]-[ferredoxin] + 2 S-adenosyl-L-methionine = (sulfur carrier)-H + biotin + 2 5'-deoxyadenosine + 2 L-methionine + 2 oxidized [2Fe-2S]-[ferredoxin]. The protein operates within cofactor biosynthesis; biotin biosynthesis; biotin from 7,8-diaminononanoate: step 2/2. In terms of biological role, catalyzes the conversion of dethiobiotin (DTB) to biotin by the insertion of a sulfur atom into dethiobiotin via a radical-based mechanism. This is Biotin synthase from Natronomonas pharaonis (strain ATCC 35678 / DSM 2160 / CIP 103997 / JCM 8858 / NBRC 14720 / NCIMB 2260 / Gabara) (Halobacterium pharaonis).